A 316-amino-acid polypeptide reads, in one-letter code: Metal tolerance protein 8 (316 aa).

The Cytoplasmic segment spans residues 1–15 (MGPVRHILNERKSRK). The chain crosses the membrane as a helical span at residues 16–36 (IAAFLLINTAYMFVEFTSGFM). Residues 37–45 (SDSLGLISD) are Vacuolar-facing. Residues 46–66 (ACHMLFDCAALAIGLYASYIA) traverse the membrane as a helical segment. Residues 67–80 (RLPANGLYNYGRGR) are Cytoplasmic-facing. The helical transmembrane segment at 81-101 (FEVLSGYVNAVFLVLVGALIV) threads the bilayer. At 102–116 (LESFERILEPREIST) the chain is on the vacuolar side. A helical membrane pass occupies residues 117-137 (SSLLTVSIGGLVVNVIGLVFF). The Cytoplasmic portion of the chain corresponds to 138–176 (HEEHHHAHGEAHSCNGGLQSSENHNKSRNRHHIDHNMEG). A disordered region spans residues 147–166 (EAHSCNGGLQSSENHNKSRN). Residues 177 to 197 (IFLHVLADTMGSVGVVISTLL) traverse the membrane as a helical segment. Over 198–202 (IKYKG) the chain is Vacuolar. A helical membrane pass occupies residues 203–223 (WLIADPICSVFISIMIVSSVL). Residues 224–316 (PLLRNSAEIL…LTIQIECVKR (93 aa)) lie on the Cytoplasmic side of the membrane.

Belongs to the cation diffusion facilitator (CDF) transporter (TC 2.A.4) family. SLC30A subfamily.

It localises to the vacuole membrane. In terms of biological role, involved in sequestration of excess metal in the cytoplasm into vacuoles to maintain metal homeostasis. The sequence is that of Metal tolerance protein 8 (MTP8) from Oryza sativa subsp. japonica (Rice).